Consider the following 793-residue polypeptide: Protein smoothened (793 aa).

The first 30 residues, 1 to 30 (MAAGRPVRGPELAPRRLLQLLLLVLLGGRG), serve as a signal peptide directing secretion. At 31 to 237 (RGAALSGNVT…EAEHQDMHSY (207 aa)) the chain is on the extracellular side. The segment at 35-61 (LSGNVTGPGPRSAGGSARRNAPVTSPP) is disordered. N-linked (GlcNAc...) asparagine glycosylation is present at asparagine 38. 5 cysteine pairs are disulfide-bonded: cysteine 68–cysteine 182, cysteine 74–cysteine 138, cysteine 82–cysteine 131, cysteine 122–cysteine 158, and cysteine 151–cysteine 173. The FZ domain maps to 69–185 (GRAAHCEPLR…DHFPEGCPNE (117 aa)). Aspartate 99 is a binding site for cholesterol. Asparagine 192 is a glycosylation site (N-linked (GlcNAc...) asparagine). 3 cysteine pairs are disulfide-bonded: cysteine 197-cysteine 217, cysteine 221-cysteine 299, and cysteine 318-cysteine 394. A helical membrane pass occupies residues 238–258 (IAAFGAVTGLCTLFTLATFVA). The Cytoplasmic portion of the chain corresponds to 259 to 266 (DWRNSNRY). The chain crosses the membrane as a helical span at residues 267-287 (PAVILFYVNACFFVGSIGWLA). Over 288–318 (QFMDGARREIVCRADGTMRFGEPTSSETLSC) the chain is Extracellular. The chain crosses the membrane as a helical span at residues 319 to 339 (VIIFVIVYYALMAGVVWFVVL). The Cytoplasmic portion of the chain corresponds to 340–362 (TYAWHTSFKALGTTYQPLSGKTS). Residues 363–383 (YFHLLTWSLPFVLTVAILAVA) form a helical membrane-spanning segment. Residues 384 to 406 (QVDGDSVSGICFVGYKNYRYRAG) are Extracellular-facing. Residue tyrosine 398 coordinates cholesterol. A helical transmembrane segment spans residues 407–427 (FVLAPIGLVLIVGGYFLIRGV). Residues 428 to 455 (MTLFSIKSNHPGLLSEKAASKINETMLR) are Cytoplasmic-facing. The helical transmembrane segment at 456-476 (LGIFGFLAFGFVLITFSCHFY) threads the bilayer. At 477-528 (DFFNQAEWERSFRDYVLCQANVTIGLPTKKPIPDCEIKNRPSLLVEKINLFA) the chain is on the extracellular side. A disulfide bridge links cysteine 494 with cysteine 511. Asparagine 497 carries an N-linked (GlcNAc...) asparagine glycan. Residues 529–549 (MFGTGIAMSTWVWTKATLLIW) form a helical membrane-spanning segment. Residues 542 to 573 (TKATLLIWRRTWCRLTGHSDDEPKRIKKSKMI) are interaction with BBS5 and BBS7. Residues 550 to 793 (RRTWCRLTGH…AELLDADSDF (244 aa)) lie on the Cytoplasmic side of the membrane. Phosphoserine is present on residues serine 560, serine 578, and serine 594. The tract at residues 574–657 (AKAFSKRREL…TPVPPEEQAN (84 aa)) is required for interaction with PRKACA. The segment at 585–597 (QNPGQELSFSMHT) is interaction with DLG5. Threonine 597 is subject to Phosphothreonine. Phosphoserine occurs at positions 599 and 642. 2 positions are modified to phosphothreonine: threonine 644 and threonine 648. Serine 666 is subject to Phosphoserine. Positions 674–684 (GRKKKRRKRKK) are enriched in basic residues. Residues 674-702 (GRKKKRRKRKKEVCPLGPAPELHHSAPVP) are disordered.

This sequence belongs to the G-protein coupled receptor Fz/Smo family. In terms of assembly, homodimer. Interacts (via C-terminus) with protein kinase A catalytic subunit PRKACA; interacts with free PRKACA subunits and the interaction leads to sequestration of PRKACA at the membrane, preventing PRKACA-mediated phosphorylation of GLI transcription factors. Interacts with ARRB2. Interacts with KIF7. Interacts with BBS5 and BBS7; the interactions are indicative for the association of SMO with the BBsome complex to facilitate ciliary localization of SMO. Interacts with DLG5 and SDCBP. Interacts with GAS8/DRC4. In terms of processing, phosphorylation by GRK kinases is required for interaction with protein kinase A catalytic subunit PRKACA. As to expression, in embryo, found in the early neural folds and neural tube, pre-somitic mesoderm and somites, developing limb bud, gut, eye, testes, cartilage, muscle, lung, epiglottis, thymus, tongue, jaw, taste buds, teeth, and skin. In adult, found in multiple tissues including heart, brain, liver, lung, skeletal muscle, kidney and testis.

It localises to the cell membrane. Its subcellular location is the cell projection. It is found in the cilium. Its function is as follows. G protein-coupled receptor which associates with the patched protein (PTCH) to transduce hedgehog protein signaling. Binding of sonic hedgehog (SHH) to its receptor patched prevents inhibition of smoothened (SMO) by patched. When active, SMO binds to and sequesters protein kinase A catalytic subunit PRKACA at the cell membrane, preventing PRKACA-mediated phosphorylation of GLI transcription factors which releases the GLI proteins from PRKACA-mediated inhibition and allows for transcriptional activation of hedgehog pathway target genes. Required for the accumulation of KIF7, GLI2 and GLI3 in the cilia. Interacts with DLG5 at the ciliary base to induce the accumulation of KIF7 and GLI2 at the ciliary tip for GLI2 activation. The sequence is that of Protein smoothened (Smo) from Rattus norvegicus (Rat).